The primary structure comprises 523 residues: 2-isopropylmalate synthase (523 aa).

The Pyruvate carboxyltransferase domain maps to 5-267 (VIIFDTTLRD…HTAINHQEIW (263 aa)). Residues aspartate 14, histidine 202, histidine 204, and asparagine 238 each contribute to the Mn(2+) site. The segment at 392–523 (RLDYFSVQSG…QHNENNKETV (132 aa)) is regulatory domain.

Belongs to the alpha-IPM synthase/homocitrate synthase family. LeuA type 1 subfamily. As to quaternary structure, homodimer. It depends on Mn(2+) as a cofactor.

It localises to the cytoplasm. The enzyme catalyses 3-methyl-2-oxobutanoate + acetyl-CoA + H2O = (2S)-2-isopropylmalate + CoA + H(+). It participates in amino-acid biosynthesis; L-leucine biosynthesis; L-leucine from 3-methyl-2-oxobutanoate: step 1/4. In terms of biological role, catalyzes the condensation of the acetyl group of acetyl-CoA with 3-methyl-2-oxobutanoate (2-ketoisovalerate) to form 3-carboxy-3-hydroxy-4-methylpentanoate (2-isopropylmalate). The chain is 2-isopropylmalate synthase from Shigella flexneri.